The sequence spans 338 residues: Popeye domain-containing protein 1 (338 aa).

Residues 1-40 are Extracellular-facing; it reads MATESILITTLPMDLNSQINNVTFGLNENETLCENWREIH. 2 N-linked (GlcNAc...) asparagine glycosylation sites follow: Asn21 and Asn29. The helical transmembrane segment at 41–61 threads the bilayer; it reads HLVFHLANTCFAAGLVIPSTL. Residues 62–65 lie on the Cytoplasmic side of the membrane; sequence NLHM. The helical transmembrane segment at 66–86 threads the bilayer; the sequence is ILLRGMLCLGCIFFIIWAILF. At 87 to 91 the chain is on the extracellular side; sequence RCALD. Residues 92–112 form a helical membrane-spanning segment; it reads IMIWNATFLSMNFMHFIYLVY. At 113-338 the chain is on the cytoplasmic side; that stretch reads KKRPIKIEKD…VGPLSHAVFC (226 aa).

The protein belongs to the popeye family.

It is found in the lateral cell membrane. Its subcellular location is the cell junction. The protein resides in the tight junction. The protein localises to the membrane. It localises to the cell membrane. It is found in the sarcolemma. Its subcellular location is the caveola. In terms of biological role, cell adhesion molecule involved in the establishment and/or maintenance of cell integrity. May play a role in vamp3-mediated vesicular transport and recycling of different receptor molecules. May be involved in the formation and regulation of the tight junction (TJ) paracellular permeability barrier in epithelial cells. May induce primordial adhesive contact and aggregation of epithelial cells in a Ca(2+)-independent manner. May be involved in epithelial movement during corneal sheet formation and regeneration. May play a role in the regulation of cell shape and movement by modulating the Rho-GTPase activity. May be involved in skeletal muscle and heart development as well as in the maintenance of heart function. May also be involved in striated muscle regeneration and in the regulation of cell spreading. This is Popeye domain-containing protein 1 (popdc1) from Xenopus tropicalis (Western clawed frog).